The primary structure comprises 282 residues: Aldo-keto reductase ML1669 (282 aa).

The Proton donor role is filled by Tyr-57. Residues Leu-197, Val-235, Arg-237, Ser-238, Ala-239, Ser-246, Asn-247, and Arg-273 each contribute to the NADPH site.

Belongs to the aldo/keto reductase family.

The chain is Aldo-keto reductase ML1669 from Mycobacterium leprae (strain TN).